The chain runs to 692 residues: Elongation factor G (692 aa).

The tr-type G domain occupies 8–282 (AKTRNIGIMA…AVIAYLPSPL (275 aa)). Residues 17-24 (AHVDAGKT), 81-85 (DTPGH), and 135-138 (NKMD) each bind GTP.

The protein belongs to the TRAFAC class translation factor GTPase superfamily. Classic translation factor GTPase family. EF-G/EF-2 subfamily.

Its subcellular location is the cytoplasm. In terms of biological role, catalyzes the GTP-dependent ribosomal translocation step during translation elongation. During this step, the ribosome changes from the pre-translocational (PRE) to the post-translocational (POST) state as the newly formed A-site-bound peptidyl-tRNA and P-site-bound deacylated tRNA move to the P and E sites, respectively. Catalyzes the coordinated movement of the two tRNA molecules, the mRNA and conformational changes in the ribosome. In Streptococcus equi subsp. zooepidemicus (strain MGCS10565), this protein is Elongation factor G.